The sequence spans 73 residues: UPF0435 protein lin1819 (73 aa).

It belongs to the UPF0435 family.

The sequence is that of UPF0435 protein lin1819 from Listeria innocua serovar 6a (strain ATCC BAA-680 / CLIP 11262).